A 417-amino-acid chain; its full sequence is Queuine tRNA-ribosyltransferase accessory subunit 2 (417 aa).

Positions 324, 326, 329, and 355 each coordinate Zn(2+).

It belongs to the queuine tRNA-ribosyltransferase family. QTRT2 subfamily. As to quaternary structure, heterodimer of a catalytic subunit and an accessory subunit. It depends on Zn(2+) as a cofactor.

The protein localises to the cytoplasm. In terms of biological role, non-catalytic subunit of the queuine tRNA-ribosyltransferase (TGT) that catalyzes the base-exchange of a guanine (G) residue with queuine (Q) at position 34 (anticodon wobble position) in tRNAs with GU(N) anticodons (tRNA-Asp, -Asn, -His and -Tyr), resulting in the hypermodified nucleoside queuosine (7-(((4,5-cis-dihydroxy-2-cyclopenten-1-yl)amino)methyl)-7-deazaguanosine). The protein is Queuine tRNA-ribosyltransferase accessory subunit 2 of Drosophila virilis (Fruit fly).